The sequence spans 228 residues: 5'(3')-deoxyribonucleotidase, mitochondrial (228 aa).

The N-terminal 31 residues, 1–31, are a transit peptide targeting the mitochondrion; that stretch reads MIRLGGWCARRLCSAAVPAGRRGAAGGLGLA. The active-site Nucleophile is D41. Mg(2+) contacts are provided by D41 and D43. The active-site Proton donor is D43. Substrate is bound by residues D43, F49, F75, W76, V77, W96, T130, and K165. Mg(2+) is bound at residue D176.

This sequence belongs to the 5'(3')-deoxyribonucleotidase family. As to quaternary structure, homodimer. It depends on Mg(2+) as a cofactor. In terms of tissue distribution, highly expressed in heart, brain and skeletal muscle. Detected at very low levels in kidney and pancreas.

The protein localises to the mitochondrion. Functionally, dephosphorylates specifically the 5' and 2'(3')-phosphates of uracil and thymine deoxyribonucleotides, and so protects mitochondrial DNA replication from excess dTTP. Has only marginal activity towards dIMP and dGMP. The sequence is that of 5'(3')-deoxyribonucleotidase, mitochondrial (NT5M) from Homo sapiens (Human).